A 617-amino-acid polypeptide reads, in one-letter code: Glutamyl-tRNA(Gln) amidotransferase subunit B, mitochondrial (617 aa).

The transit peptide at 1–56 directs the protein to the mitochondrion; the sequence is MPRIPTSVLGKYLLSGQISRQGCVGARQITRHSALPSAAVSVANSARLLHVSSETV. The interval 53-90 is disordered; that stretch reads SETVPPPPAQPVPLRKQLKDEAKKAKKQGKKKSKGDSQ. A compositionally biased stretch (basic residues) spans 76–85; it reads KAKKQGKKKS.

This sequence belongs to the GatB/GatE family. GatB subfamily. As to quaternary structure, subunit of the heterotrimeric GatCAB amidotransferase (AdT) complex, composed of A, B and C subunits.

It localises to the mitochondrion. It carries out the reaction L-glutamyl-tRNA(Gln) + L-glutamine + ATP + H2O = L-glutaminyl-tRNA(Gln) + L-glutamate + ADP + phosphate + H(+). Its function is as follows. Allows the formation of correctly charged Gln-tRNA(Gln) through the transamidation of misacylated Glu-tRNA(Gln) in the mitochondria. The reaction takes place in the presence of glutamine and ATP through an activated gamma-phospho-Glu-tRNA(Gln). The sequence is that of Glutamyl-tRNA(Gln) amidotransferase subunit B, mitochondrial from Fusarium vanettenii (strain ATCC MYA-4622 / CBS 123669 / FGSC 9596 / NRRL 45880 / 77-13-4) (Fusarium solani subsp. pisi).